The primary structure comprises 258 residues: Triosephosphate isomerase (258 aa).

Asn9 to Lys11 is a binding site for substrate. His95 acts as the Electrophile in catalysis. Glu167 serves as the catalytic Proton acceptor. Substrate contacts are provided by Gly173 and Ser212.

The protein belongs to the triosephosphate isomerase family. As to quaternary structure, homodimer.

Its subcellular location is the cytoplasm. The catalysed reaction is D-glyceraldehyde 3-phosphate = dihydroxyacetone phosphate. It functions in the pathway carbohydrate biosynthesis; gluconeogenesis. The protein operates within carbohydrate degradation; glycolysis; D-glyceraldehyde 3-phosphate from glycerone phosphate: step 1/1. Involved in the gluconeogenesis. Catalyzes stereospecifically the conversion of dihydroxyacetone phosphate (DHAP) to D-glyceraldehyde-3-phosphate (G3P). In Blochmanniella pennsylvanica (strain BPEN), this protein is Triosephosphate isomerase.